The following is a 303-amino-acid chain: MLRWTRAWTAPYRGIGLSNSSFSRLPIAPSSSQGGTEPRPVRLSYKLLDGEAASPALVFLHGLFGSKTNFNFVAKTLAQQTGRRVLTVDARNHGESSHSPDMSYEAMSKDLQDLLPHLGLVPCVLIGHSMGGRTAMLLALQRPELVERLIAVDISQVETTSSSNFPNYIAAMRAVDMANEASLSGARKLADERLRSVIQSASIRQLLLTNLVEVDGRFVWRLNLDALAQHLDKILDFPARQETYSGPTLFLRGGNSQFLLPSHYPEIRRLFPRAQMQTVPNAGHWVHSDRPQDFMAAVQSFLA.

The N-terminal 22 residues, 1 to 22 (MLRWTRAWTAPYRGIGLSNSSF), are a transit peptide targeting the mitochondrion. The region spanning 55 to 290 (PALVFLHGLF…NAGHWVHSDR (236 aa)) is the AB hydrolase-1 domain. An N6-succinyllysine modification is found at K75. Active-site charge relay system residues include S129, D225, and H284.

This sequence belongs to the AB hydrolase superfamily. In terms of assembly, interacts with OGDH and DLST; this interaction maintains the functional lipoylation of the 2-oxoglutarate dehydrogenase complex. Post-translationally, phosphorylated.

It localises to the mitochondrion. The protein resides in the mitochondrion matrix. The enzyme catalyses a 1,3-diacyl-sn-glycerol + H2O = a 1-acyl-sn-glycerol + a fatty acid + H(+). It catalyses the reaction 1-octadecanoyl-2-(9Z-octadecenoyl)-sn-glycerol + H2O = 2-(9Z-octadecenoyl)-glycerol + octadecanoate + H(+). It carries out the reaction 1-octadecanoyl-2-(4Z,7Z,10Z,13Z,16Z,19Z-docosahexaenoyl)-sn-glycerol + H2O = 2-(4Z,7Z,10Z,13Z,16Z,19Z-docosahexaenoyl)-glycerol + octadecanoate + H(+). The catalysed reaction is a 1,2-diacyl-sn-glycerol + H2O = a 2-acylglycerol + a fatty acid + H(+). The enzyme catalyses 1,2-didecanoylglycerol + H2O = decanoylglycerol + decanoate + H(+). It catalyses the reaction 1-octadecanoyl-2-(5Z,8Z,11Z,14Z-eicosatetraenoyl)-sn-glycerol + H2O = 2-(5Z,8Z,11Z,14Z-eicosatetraenoyl)-glycerol + octadecanoate + H(+). With respect to regulation, the diacylglycerol lipase activity can be modulated by phosphorylation by cAMP-dependent protein kinase. Its function is as follows. Catalyzes the hydrolysis of diacylglycerol in vitro and may function as a key regulator in lipid metabolism, namely by regulating the intracellular levels of diacylglycerol. 1,2-diacyl-sn-glycerols are the preferred substrate over 1,3-diacyl-sn-glycerols. The enzyme hydrolyzes stearate in preference to palmitate from the sn-1 position of 1,2-diacyl-sn-glycerols. Maintains the functional lipoylation of the 2-oxoglutarate dehydrogenase complex (OGDHc) through its interaction with the OGDHc by preventing the formation of lipoyl adducts. In addition, is also required for the expansion and differentiation of embryonic stem cells (ESCs). The polypeptide is sn-1-specific diacylglycerol lipase ABHD11 (Bos taurus (Bovine)).